Reading from the N-terminus, the 428-residue chain is Glutamyl-tRNA reductase (428 aa).

Substrate contacts are provided by residues Thr-49 to Arg-52, Ser-109, Glu-114 to Gln-116, and Gln-120. Residue Cys-50 is the Nucleophile of the active site. Gly-189 to Ala-194 is a binding site for NADP(+).

The protein belongs to the glutamyl-tRNA reductase family. Homodimer.

The enzyme catalyses (S)-4-amino-5-oxopentanoate + tRNA(Glu) + NADP(+) = L-glutamyl-tRNA(Glu) + NADPH + H(+). It participates in porphyrin-containing compound metabolism; protoporphyrin-IX biosynthesis; 5-aminolevulinate from L-glutamyl-tRNA(Glu): step 1/2. The protein operates within porphyrin-containing compound metabolism; chlorophyll biosynthesis. In terms of biological role, catalyzes the NADPH-dependent reduction of glutamyl-tRNA(Glu) to glutamate 1-semialdehyde (GSA). The chain is Glutamyl-tRNA reductase from Rippkaea orientalis (strain PCC 8801 / RF-1) (Cyanothece sp. (strain PCC 8801)).